Here is a 258-residue protein sequence, read N- to C-terminus: Uridylate cyclase (258 aa).

Residues 50–190 (AAIFIDLRGS…DVVNKASKMC (141 aa)) enclose the Guanylate cyclase domain. A ribonucleoside 5'-triphosphate is bound at residue F53. 2 residues coordinate Mn(2+): D55 and D102.

This sequence belongs to the adenylyl cyclase class-4/guanylyl cyclase family. Pyrimidine cyclase subfamily. In terms of assembly, homodimer. Requires Mn(2+) as cofactor.

Its subcellular location is the cytoplasm. It carries out the reaction UTP = 3',5'-cyclic UMP + diphosphate. Functionally, pycsar (pyrimidine cyclase system for antiphage resistance) provides immunity against bacteriophage. The pyrimidine cyclase (PycC) synthesizes cyclic nucleotides in response to infection; these serve as specific second messenger signals. The signals activate the adjacent effector, leading to bacterial cell death and abortive phage infection. A clade C Pycsar system. In terms of biological role, the pyrimidine cyclase gene of a two-gene Pycsar system, weakly generates cyclic UMP (cUMP) from UTP, has little to no activity on ATP, CTP or GTP. Expression of this and adjacent effector GmPycTM (AC P0DV43) probably confers resistance to bacteriophage. The genes are probably only expressed in response to bacteriophage infection. The sequence is that of Uridylate cyclase from Gulbenkiania mobilis.